The chain runs to 141 residues: Hemoglobin subunit alpha-A (141 aa).

Residues V1–R141 enclose the Globin domain. H58 is an O2 binding site. Residue H87 coordinates heme b.

Belongs to the globin family. In terms of assembly, heterotetramer of two alpha chains and two beta chains. As to expression, red blood cells.

Involved in oxygen transport from the lung to the various peripheral tissues. This chain is Hemoglobin subunit alpha-A (HBAA), found in Vultur gryphus (Andean condor).